A 280-amino-acid polypeptide reads, in one-letter code: PsbP domain-containing protein 7, chloroplastic (280 aa).

A chloroplast-targeting transit peptide spans 1-36 (MSLKPYFSLLYSSPTNVKLSNFLIAQQPSGDLKTTP).

It belongs to the PsbP family.

The protein localises to the plastid. The protein resides in the chloroplast. This chain is PsbP domain-containing protein 7, chloroplastic (PPD7), found in Arabidopsis thaliana (Mouse-ear cress).